Consider the following 246-residue polypeptide: tRNA (guanine-N(1)-)-methyltransferase (246 aa).

Residues G117 and 137 to 142 (IGDYVL) contribute to the S-adenosyl-L-methionine site.

The protein belongs to the RNA methyltransferase TrmD family. Homodimer.

The protein resides in the cytoplasm. The catalysed reaction is guanosine(37) in tRNA + S-adenosyl-L-methionine = N(1)-methylguanosine(37) in tRNA + S-adenosyl-L-homocysteine + H(+). In terms of biological role, specifically methylates guanosine-37 in various tRNAs. The chain is tRNA (guanine-N(1)-)-methyltransferase from Acinetobacter baumannii (strain ACICU).